A 281-amino-acid polypeptide reads, in one-letter code: Pantothenate synthetase (281 aa).

31 to 38 (MGNLHAGH) lines the ATP pocket. The Proton donor role is filled by His-38. Position 62 (Gln-62) interacts with (R)-pantoate. A beta-alanine-binding site is contributed by Gln-62. 150–153 (GKKD) is an ATP binding site. Gln-156 serves as a coordination point for (R)-pantoate. Residues Val-179 and 187–190 (MSSR) contribute to the ATP site.

It belongs to the pantothenate synthetase family. In terms of assembly, homodimer.

The protein localises to the cytoplasm. It catalyses the reaction (R)-pantoate + beta-alanine + ATP = (R)-pantothenate + AMP + diphosphate + H(+). It participates in cofactor biosynthesis; (R)-pantothenate biosynthesis; (R)-pantothenate from (R)-pantoate and beta-alanine: step 1/1. Functionally, catalyzes the condensation of pantoate with beta-alanine in an ATP-dependent reaction via a pantoyl-adenylate intermediate. This is Pantothenate synthetase from Xylella fastidiosa (strain M23).